The primary structure comprises 590 residues: Melanophilin (590 aa).

Residues 4 to 124 (RLDLSTLTDE…IGSLEWYYQH (121 aa)) enclose the RabBD domain. Residues 64 to 107 (CARCLQPYRLLLNSRRQCLECSLFVCKSCSHAHPEEQGWLCDPC) form an FYVE-type zinc finger. 5 disordered regions span residues 147 to 182 (GGGG…PLNS), 215 to 276 (SVPE…AELD), 311 to 335 (DTSD…ARTV), 361 to 472 (VLPP…SEIS), and 485 to 590 (GLTV…AQQP). Residues 154–172 (SLEEGNGDSEQTDEDGDLD) are compositionally biased toward acidic residues. Positions 215–238 (SVPESAHSLQSLSGEPYSEDTTSL) are enriched in polar residues. A coiled-coil region spans residues 339–485 (QILELNKRMS…SRIAALRAAG (147 aa)). The segment covering 391 to 401 (LTSNISGSSTS) has biased composition (low complexity). Residues 424 to 433 (GHMETQERNP) are compositionally biased toward basic and acidic residues.

In terms of assembly, binds RAB27A that has been activated by GTP-binding via its N-terminus. Binds MYO5A via its C-terminal coiled coil domain. As to expression, highly expressed in embryos at day 7; not detectable at day 11. Highly expressed in adult stomach; detected at lower levels in kidney, lung, skin and small intestine. Detected in melanocytes.

It is found in the melanosome. Functionally, rab effector protein involved in melanosome transport. Serves as link between melanosome-bound RAB27A and the motor protein MYO5A. This chain is Melanophilin (Mlph), found in Mus musculus (Mouse).